We begin with the raw amino-acid sequence, 454 residues long: MTTRIKEIFQTGQPDQSVTVQGWVRTKRELKEFTFLEVNDGSSLANLQVILEPTLPDYENVLKTISTGAAIAVSGNLVPSPGKGQNIELKAAEITLYGDCPPDYPLQKKRHSFEFLRTIAHLRARTNTLGAVMRVRNACATAIHSFFQEKGFIWVHTPIITANDCEGAGELFTVTSLDLKKPANFAEDFFGKRAYLTVSGQLQAEVMAMALSNVYTFGPTFRAENSNTSRHLAEFWMVEPEMAFCDLEGDQDLAEAFLKYIFKFVLENCPEDLQFFNERIDKTVLSTAENIVNSEFGRITYSEAIELLEKADRQFEFPVEWGVDLQSEHERYLAEELFKKPVIVTNYPKTIKAFYMRLDDNNKTVSAMDILAPKIGEIIGGSQREERLDVLIQRMQEQGMNPDDLWWYLDLRRYGSVPHAGFGLGFERLVQFMTGMTNIRDVIPFPRTPLSADF.

Belongs to the class-II aminoacyl-tRNA synthetase family. As to quaternary structure, homodimer.

The protein localises to the cytoplasm. The enzyme catalyses tRNA(Asn) + L-asparagine + ATP = L-asparaginyl-tRNA(Asn) + AMP + diphosphate + H(+). The protein is Asparagine--tRNA ligase of Microcystis aeruginosa (strain NIES-843 / IAM M-2473).